Consider the following 132-residue polypeptide: DNA-directed RNA polymerase subunit omega (132 aa).

The interval 76-105 (EVDEPEQDAASIAEGQLTSGSQDEDEMPET) is disordered.

This sequence belongs to the RNA polymerase subunit omega family. As to quaternary structure, the RNAP catalytic core consists of 2 alpha, 1 beta, 1 beta' and 1 omega subunit. When a sigma factor is associated with the core the holoenzyme is formed, which can initiate transcription.

It carries out the reaction RNA(n) + a ribonucleoside 5'-triphosphate = RNA(n+1) + diphosphate. Promotes RNA polymerase assembly. Latches the N- and C-terminal regions of the beta' subunit thereby facilitating its interaction with the beta and alpha subunits. In Allorhizobium ampelinum (strain ATCC BAA-846 / DSM 112012 / S4) (Agrobacterium vitis (strain S4)), this protein is DNA-directed RNA polymerase subunit omega.